A 661-amino-acid chain; its full sequence is UvrABC system protein B (661 aa).

The Helicase ATP-binding domain occupies 25–178 (EGILKGEKFQ…DEVIRDLIRM (154 aa)). Residue 38 to 45 (GVTGSGKT) coordinates ATP. Positions 91 to 114 (YYDYYQPEAYIPETDTYIEKDSSI) match the Beta-hairpin motif. Positions 429 to 591 (QIDHLIGEIR…IVPQTVRKGI (163 aa)) constitute a Helicase C-terminal domain. Positions 625 to 660 (EEYIKELEQEMKKLAIELEFEKAAKVRDKIFELKKL) constitute a UVR domain.

It belongs to the UvrB family. As to quaternary structure, forms a heterotetramer with UvrA during the search for lesions. Interacts with UvrC in an incision complex.

The protein resides in the cytoplasm. In terms of biological role, the UvrABC repair system catalyzes the recognition and processing of DNA lesions. A damage recognition complex composed of 2 UvrA and 2 UvrB subunits scans DNA for abnormalities. Upon binding of the UvrA(2)B(2) complex to a putative damaged site, the DNA wraps around one UvrB monomer. DNA wrap is dependent on ATP binding by UvrB and probably causes local melting of the DNA helix, facilitating insertion of UvrB beta-hairpin between the DNA strands. Then UvrB probes one DNA strand for the presence of a lesion. If a lesion is found the UvrA subunits dissociate and the UvrB-DNA preincision complex is formed. This complex is subsequently bound by UvrC and the second UvrB is released. If no lesion is found, the DNA wraps around the other UvrB subunit that will check the other stand for damage. The protein is UvrABC system protein B of Caldicellulosiruptor bescii (strain ATCC BAA-1888 / DSM 6725 / KCTC 15123 / Z-1320) (Anaerocellum thermophilum).